Here is a 234-residue protein sequence, read N- to C-terminus: KNMITGAAQMDGAILVVSGADGPMPQTKEHILLAKQVGVPHIVVFLNKQDQVDDDELLELVELEVRELLDKYEFPGDEIPVVPGTALLALEALIANPKTQRGENKWVDKIYELMDKVDSYIPTPERETDKPFLLAVEDVLSITGRGTVATGRVERGTLKISDNVEIVGLKPTQTAVVTGLEMFKTLDETIAGDNVGVLLRGVQKKDIERGMVIAKPGTITPHTKFEAQVYVLTK.

The tr-type G domain occupies 1–125; that stretch reads KNMITGAAQM…KVDSYIPTPE (125 aa). 47 to 50 contributes to the GTP binding site; it reads NKQD.

The protein belongs to the TRAFAC class translation factor GTPase superfamily. Classic translation factor GTPase family. EF-Tu/EF-1A subfamily.

It localises to the plastid. It is found in the chloroplast. The catalysed reaction is GTP + H2O = GDP + phosphate + H(+). Its function is as follows. GTP hydrolase that promotes the GTP-dependent binding of aminoacyl-tRNA to the A-site of ribosomes during protein biosynthesis. The polypeptide is Elongation factor Tu, chloroplastic (tufA) (Pandorina morum (Freshwater green alga)).